We begin with the raw amino-acid sequence, 450 residues long: tRNA-2-methylthio-N(6)-dimethylallyladenosine synthase (450 aa).

The MTTase N-terminal domain maps to 7 to 127 (KRLYIKTYGC…LPELIARAHR (121 aa)). 6 residues coordinate [4Fe-4S] cluster: cysteine 16, cysteine 52, cysteine 90, cysteine 165, cysteine 169, and cysteine 172. Residues 151–378 (QVSGVSAFLT…NQLLDEQQKA (228 aa)) form the Radical SAM core domain. Residues 381–443 (ILQVGKTMPV…KMSLGGVLET (63 aa)) form the TRAM domain.

This sequence belongs to the methylthiotransferase family. MiaB subfamily. Monomer. It depends on [4Fe-4S] cluster as a cofactor.

The protein localises to the cytoplasm. It catalyses the reaction N(6)-dimethylallyladenosine(37) in tRNA + (sulfur carrier)-SH + AH2 + 2 S-adenosyl-L-methionine = 2-methylsulfanyl-N(6)-dimethylallyladenosine(37) in tRNA + (sulfur carrier)-H + 5'-deoxyadenosine + L-methionine + A + S-adenosyl-L-homocysteine + 2 H(+). Functionally, catalyzes the methylthiolation of N6-(dimethylallyl)adenosine (i(6)A), leading to the formation of 2-methylthio-N6-(dimethylallyl)adenosine (ms(2)i(6)A) at position 37 in tRNAs that read codons beginning with uridine. This is tRNA-2-methylthio-N(6)-dimethylallyladenosine synthase from Caulobacter sp. (strain K31).